A 168-amino-acid polypeptide reads, in one-letter code: Protein A40 (168 aa).

The Cytoplasmic portion of the chain corresponds to 1 to 9 (MNKPKTDYA). The chain crosses the membrane as a helical; Signal-anchor for type II membrane protein span at residues 10–30 (GYACCVICGLIVGIIFTATLL). The Extracellular portion of the chain corresponds to 31 to 168 (KVVERKLVHT…TTFLSYHYFG (138 aa)). One can recognise a C-type lectin domain in the interval 63–168 (YNNKCIHLST…TTFLSYHYFG (106 aa)).

This sequence belongs to the poxviridae A40 protein family.

It is found in the host membrane. The sequence is that of Protein A40 from Homo sapiens (Human).